Here is a 430-residue protein sequence, read N- to C-terminus: Serine--tRNA ligase (430 aa).

Residue 237 to 239 coordinates L-serine; it reads TAE. 268-270 is an ATP binding site; it reads RSE. L-serine is bound at residue Glu291. 355-358 is a binding site for ATP; that stretch reads EISS. Ser391 contacts L-serine.

The protein belongs to the class-II aminoacyl-tRNA synthetase family. Type-1 seryl-tRNA synthetase subfamily. Homodimer. The tRNA molecule binds across the dimer.

Its subcellular location is the cytoplasm. The catalysed reaction is tRNA(Ser) + L-serine + ATP = L-seryl-tRNA(Ser) + AMP + diphosphate + H(+). It catalyses the reaction tRNA(Sec) + L-serine + ATP = L-seryl-tRNA(Sec) + AMP + diphosphate + H(+). It functions in the pathway aminoacyl-tRNA biosynthesis; selenocysteinyl-tRNA(Sec) biosynthesis; L-seryl-tRNA(Sec) from L-serine and tRNA(Sec): step 1/1. In terms of biological role, catalyzes the attachment of serine to tRNA(Ser). Is also able to aminoacylate tRNA(Sec) with serine, to form the misacylated tRNA L-seryl-tRNA(Sec), which will be further converted into selenocysteinyl-tRNA(Sec). The polypeptide is Serine--tRNA ligase (Cronobacter sakazakii (strain ATCC BAA-894) (Enterobacter sakazakii)).